Here is a 357-residue protein sequence, read N- to C-terminus: DNA replication and repair protein RecF (357 aa).

Position 30–37 (30–37) interacts with ATP; that stretch reads GANGSGKT.

It belongs to the RecF family.

It localises to the cytoplasm. Functionally, the RecF protein is involved in DNA metabolism; it is required for DNA replication and normal SOS inducibility. RecF binds preferentially to single-stranded, linear DNA. It also seems to bind ATP. In Enterobacter sp. (strain 638), this protein is DNA replication and repair protein RecF.